The chain runs to 150 residues: MQLVHVLVVLLSVVAHAKKFFIPNLKANWHKAHEFCISLDMNMVSVESPKDHDELVQFVRKTDKFSNATRFWLGASDLAEEGVYTWVSSSRLMTFTNWAENEPSSTEAENCVEMIHNTYVNRIWTWNDIDCRGFKAYIVCEERQSIAQFR.

Positions 1–17 are cleaved as a signal peptide; it reads MQLVHVLVVLLSVVAHA. The C-type lectin domain occupies 18–140; the sequence is KKFFIPNLKA…CRGFKAYIVC (123 aa). Asparagine 67 is a glycosylation site (N-linked (GlcNAc...) asparagine). Cysteines 111 and 131 form a disulfide.

In terms of assembly, interacts with putative receptor-type tyrosine-protein phosphatase mosPTP-1; the interaction probably mediates the recruitment of Japanese encephalitis virus particles in complex with C-type lectin mosGCTL-7 to the cell surface. (Microbial infection) Interacts with envelope protein E (glycosylated) of Japanese encephalitis virus in a calcium-dependent manner.

It localises to the secreted. Carbohydrate-binding protein. Its function is as follows. (Microbial infection) Facilitates Japanese encephalitis virus infection in mosquitoes probably via capturing viral particles and presenting them to a ligand on the cell surface, thereby facilitating viral entry. In Aedes aegypti (Yellowfever mosquito), this protein is C-type lectin mosGCTL-7.